Consider the following 415-residue polypeptide: Squalene synthase 11 (415 aa).

The next 2 membrane-spanning stretches (helical) occupy residues 281–301 (AIFR…ALCF) and 392–412 (LIII…SNLP).

It belongs to the phytoene/squalene synthase family. Mg(2+) serves as cofactor. It depends on Mn(2+) as a cofactor.

It localises to the endoplasmic reticulum membrane. It catalyses the reaction 2 (2E,6E)-farnesyl diphosphate + NADH + H(+) = squalene + 2 diphosphate + NAD(+). The catalysed reaction is 2 (2E,6E)-farnesyl diphosphate + NADPH + H(+) = squalene + 2 diphosphate + NADP(+). Its pathway is terpene metabolism; lanosterol biosynthesis; lanosterol from farnesyl diphosphate: step 1/3. Component of the triterpene saponins (e.g. ginsenosides or panaxosides) and phytosterols biosynthetic pathways. Catalyzes the biosynthesis of squalene. This Panax ginseng (Korean ginseng) protein is Squalene synthase 11.